The sequence spans 156 residues: Cyanate hydratase (156 aa).

Active-site residues include Arg-96, Glu-99, and Ser-122.

It belongs to the cyanase family.

The enzyme catalyses cyanate + hydrogencarbonate + 3 H(+) = NH4(+) + 2 CO2. In terms of biological role, catalyzes the reaction of cyanate with bicarbonate to produce ammonia and carbon dioxide. In Escherichia coli (strain K12 / DH10B), this protein is Cyanate hydratase.